We begin with the raw amino-acid sequence, 238 residues long: Flagellar L-ring protein (238 aa).

An N-terminal signal peptide occupies residues 1–23 (MVKLFSYKIKYYLTAFFIIIIQS). A lipid anchor (N-palmitoyl cysteine) is attached at Cys-24. A lipid anchor (S-diacylglycerol cysteine) is attached at Cys-24.

The protein belongs to the FlgH family. In terms of assembly, the basal body constitutes a major portion of the flagellar organelle and consists of four rings (L,P,S, and M) mounted on a central rod.

It localises to the cell outer membrane. The protein localises to the bacterial flagellum basal body. Its function is as follows. Assembles around the rod to form the L-ring and probably protects the motor/basal body from shearing forces during rotation. This is Flagellar L-ring protein from Buchnera aphidicola subsp. Schizaphis graminum (strain Sg).